Here is a 1469-residue protein sequence, read N- to C-terminus: MENFHHRPFKGGFGVGRVPTSLYYSLSDFSLSAISIFPTHYDQPYLNEAPSWYKYSLESGLVCLYLYLIYRWITRSFTVKQTVGSEFSGLRKAHGILLWLLSILFLGMTAFMFVNDAFPTAFSDPPVKICLLAYSVHLFLLHSLRMIYPRARPTLYHAAVLLNLLLLPPIFHFYSYPFFFVDHPPLSSYSPFLWFYFFITIVGNFIPLFTPRVWYPLFPEDNYQPSAEQVCSMFNFACSYGYLNPLVLTAKRRVVEVDDTPVIPDYDKNKAWTYRFERMKTPSLFITIHKIFWRQILGMGVSSFMVSVCQFLSPIALNRLLKHLESPSSSSVNPLVWIVLLLTGPFLTSLFTQFYLFMSTRYLARSYTTLVQQIYNKVIRSRFVQNKSGDSKVGRSNNLISTDVDDIGEIREFIHIIVRAPVEIAGSIYLLQKLLGWSAYVGLALTVLTCSVPIVLGPLVAKLTLRANRATDSRIELMSELLQSIRITKFFGWELPMLDRVKQRRQVELNRTWKLLLMEICIQVLVESLPVFSMFATFVVFTTIMGQTITPSIAFTSISLFSFIRTQFSWIAYLMRQIVQIFVSIGRVSDFLNDPDEVDPVNTIEDTSQEIGFFNASLTWVSNPSPGDFCLRDLNIVFPRNKLSIVIGPTGSGKSSLISALLGELSLNKGSYNLPRSKGVSYVSQVPWLRNATIRDNILFDYPYIEERYKKVIQACGLLTDLQSFVASDLTEIGEKGVTLSGGQKQRIALARAVYSPTSIVLMDDVFSALDIHTSNWIYKHCFQSSLMENRTVILVTHNVHLFMDSAAFIVTVKNGSAFPVTDKSSPLLFLAEQAASASEAAAPDLAAIPIPNEVDDAEAADEKDGKLVEEEQRVTGDVVFSEIFSYMKHFGSGFYVAAVLLFFVTTQATSILIDLWVAFWTNSSVNSPDVNNNKFLFVYGTMLLAYSLLDFLRTVSYDRGAWWASRKLHDSMLESVFGTFASWFDKTPTGRIVNRFAKDIRSIDMNLSGWLFFSINCFLSVAGGILSVSSAMPIFMIPAVIVCLAGYYFGLLYTRAQVGVKRLISIYTSPIFSLLGESIVGVSVIRAFNRQTIFKQMFSERLDNLVRLQSTSYNLNRWVAVRTDGISGLVGAIAGLIALLQKDLSPGVVGFSLNQAVIFSSSVLLFVRSCNSLQAEMNSYERVLEYSKLPQEPAPTIAGQVPATWPKEGDIVFNHVSVSYSAAGPTILKDVNLHINPSEKVAVVGRTGSGKSTLGLTLLRFTHRISGEIYINGRETQSVNLNALRQRISFIPQDPILFSGTVRSNLDPFDELEDNFLNEALKTSGASSMIMAHTDDQKPIHITLDTHVASEGSNFSQGQKQVLALARAIVRRSKIIILDECTASVDDAMDQKIQKTLREAFGDATMLCIAHRLKTIVDYDKVMVLDKGVLVEYGPPAVLYHNNGHFRRMCDGSGITFLPPETRGSKSA.

A run of 8 helical transmembrane segments spans residues 21-40, 55-74, 94-114, 121-141, 160-180, 189-209, 296-316, and 337-357; these read SLYY…FPTH, YSLE…RWIT, HGIL…FMFV, AFSD…LFLL, VLLN…PFFF, YSPF…IPLF, ILGM…SPIA, and WIVL…FYLF. The 285-residue stretch at 296-580 folds into the ABC transmembrane type-1 1 domain; that stretch reads ILGMGVSSFM…IAYLMRQIVQ (285 aa). Asn-386 carries an N-linked (GlcNAc...) asparagine glycan. 2 consecutive transmembrane segments (helical) span residues 412–432 and 441–461; these read EFIH…YLLQ and VGLA…PLVA. Asn-510 carries N-linked (GlcNAc...) asparagine glycosylation. Transmembrane regions (helical) follow at residues 524 to 544 and 553 to 573; these read VLVE…FTTI and IAFT…WIAY. Positions 611 to 840 constitute an ABC transporter 1 domain; the sequence is IGFFNASLTW…LAEQAASASE (230 aa). Residue Asn-615 is glycosylated (N-linked (GlcNAc...) asparagine). 648-655 contacts ATP; that stretch reads GPTGSGKS. 3 N-linked (GlcNAc...) asparagine glycosylation sites follow: Asn-691, Asn-790, and Asn-815. Residues 894-914 form a helical membrane-spanning segment; that stretch reads GFYVAAVLLFFVTTQATSILI. In terms of domain architecture, ABC transmembrane type-1 2 spans 897-1176; that stretch reads VAAVLLFFVT…FVRSCNSLQA (280 aa). An N-linked (GlcNAc...) asparagine glycan is attached at Asn-923. A helical membrane pass occupies residues 936–956; it reads FLFVYGTMLLAYSLLDFLRTV. An N-linked (GlcNAc...) asparagine glycan is attached at Asn-1007. Transmembrane regions (helical) follow at residues 1009-1029, 1033-1053, 1065-1085, 1120-1140, and 1148-1168; these read SGWL…ILSV, MPIF…FGLL, ISIY…GVSV, VAVR…LIAL, and GVVG…LLFV. Residues 1214-1453 form the ABC transporter 2 domain; the sequence is FNHVSVSYSA…NGHFRRMCDG (240 aa). An ATP-binding site is contributed by 1246–1253; that stretch reads GRTGSGKS. A glycan (N-linked (GlcNAc...) asparagine) is linked at Asn-1355.

The protein belongs to the ABC transporter superfamily. ABCC family. Conjugate transporter (TC 3.A.1.208) subfamily.

Its subcellular location is the vacuole membrane. The enzyme catalyses ATP + H2O + xenobioticSide 1 = ADP + phosphate + xenobioticSide 2.. Functionally, involved in detoxification of xenobiotics, and vacuolar sequestration of glutathione S-conjugates. Together with abc2, required for accumulation of a red pigment (ade pigment) in the vacuole of a mutant affected in the adenine biosynthetic pathway. This chain is ATP-binding cassette transporter abc4, found in Schizosaccharomyces pombe (strain 972 / ATCC 24843) (Fission yeast).